We begin with the raw amino-acid sequence, 461 residues long: Porin AaxA (461 aa).

Residues 1-22 (MSFRSVLLTALLSLSFTTTMQA) form the signal peptide.

The protein belongs to the OprB family.

It localises to the cell outer membrane. Its function is as follows. Facilitates L-arginine uptake, as part of the AaxABC system. The arginine uptake by the bacterium in the macrophage may be a virulence factor against the host innate immune response. This chain is Porin AaxA (aaxA), found in Chlamydia trachomatis serovar D (strain ATCC VR-885 / DSM 19411 / UW-3/Cx).